Consider the following 1240-residue polypeptide: MPPNSKSKRRKNKSKQHNKKNGNSDPEQSINPTQLVPRMEPELYHTESDYPTSRVIKRAPNGDVIVEPINTDDDKKERTANLTHNKDSMDSASSLAFTLDSHWESLSPEEKKTILRIEKEEVFNVIRNYQDDHSCSCSVCGRRHLAMDQEMERIYNTLYAMDKDKDPETNPIKFHLGIIKELQISKNQQQNDLSSTKGEVVKNFLSSSTVGSLKEEVLHFKQKQLSKQEQAHNETADNTSLLEENLNNIHINKTSSEISANFNSVSDEELQQKYSNFTKTFISSHPKIAEEYVQKMMMYPNIRALTDDLMNSNGQGFLNAIEDFVRDGQIQASKKDDSITEDEASSTDLTDPKEFTTMLHSGKPLTEDEYADLQRNIAERMTNAYDTASKKFKDVSQLEKELFTRFMSGRDKKSFRELIIQSFKNKFDGELGPSVLAATLSSCFSSQSKDTSLDTDSIYEDEDEEDYDDYSEYAEDSEEVSEYEGIEAVEKPEHDEKSNGIRETLHLSYDHDHKRQNHPHHHYHSTSTHSEDELSEEEYISDIELPHDPHKHFHRDDDILDGDEDEPEEEDENEGDDEEDTYDSGLDETDRLEEGRKLIQIAITKLLQSRIMASYHEKQADNNRLKLLQELEEEKRKKREKEEKKQKKREKEKEKKRLQQLAKEEEKRKREEEKERLKKELEEREMRRREAQRKKVEEAKRKKDEERKRRLEEQQRREEMQEKQRKQKEELKRKREEEKKRIREQKRLEQEKLQKEKEEEERQRLIAEDALRKQKLNEEQTSANILSAKPFTENGVGNPVSSQSHPNMTNYQEDNSCSINDEILKMVNSVAASKPVSPTGFNVHDLLLPSTNNQMPAMEQSHLPQPGNQNNHFGTTTIPNALDLATKSSLQTENNYLMNSQTLENTSLLMHNNSSPTKLLPNDFGLSSWGGLTNTMSINPTCKPPVIQTSEMESQAHKSSPQATMPSFGLPNGGTHRKSFTDELNTLTSMLSSSGFADTSLSSSGFPPSQRSVWNDQKSSFSGPSTAGNFNNSSIQSGMLLAPTLGSVESFPNRTSIWDSSTTPMMNKSELSGRNITSTAQDSPAFMASNIWSSNSQYNSPYLTSNVLQSPQISSGVDESHILDSIYNTYLAISPQDSLNPYIAIGTLFQNLVGLNLDYSTFINKLISMQGAYNCEFFTDNNGSITHVRFARQTPAGHSKGLLNQLFSGLNDPTATPFTSRPHTSTRASFPIASSTTQTS.

Residues 1–20 show a composition bias toward basic residues; it reads MPPNSKSKRRKNKSKQHNKK. Residues 1 to 76 are disordered; it reads MPPNSKSKRR…EPINTDDDKK (76 aa). Positions 25 to 34 are enriched in polar residues; it reads DPEQSINPTQ. Over residues 39 to 48 the composition is skewed to basic and acidic residues; sequence MEPELYHTES. Phosphoserine is present on S266. Disordered regions lie at residues 446 to 593, 634 to 744, 951 to 980, 998 to 1029, and 1214 to 1240; these read SQSK…DRLE, EKRK…RIRE, EMES…RKSF, DTSL…TAGN, and TATP…TQTS. A compositionally biased stretch (acidic residues) spans 457–487; that stretch reads SIYEDEDEEDYDDYSEYAEDSEEVSEYEGIE. Residues 488 to 513 are compositionally biased toward basic and acidic residues; sequence AVEKPEHDEKSNGIRETLHLSYDHDH. The span at 514–524 shows a compositional bias: basic residues; it reads KRQNHPHHHYH. Residues 558–587 are compositionally biased toward acidic residues; it reads DILDGDEDEPEEEDENEGDDEEDTYDSGLD. Residues 616 to 777 adopt a coiled-coil conformation; the sequence is HEKQADNNRL…EDALRKQKLN (162 aa). Residues 951-965 are compositionally biased toward polar residues; the sequence is EMESQAHKSSPQATM.

It belongs to the NST1 family. In terms of assembly, interacts with MSL1.

The protein resides in the cytoplasm. Functionally, with MSL1, acts as a negative regulator of salt tolerance. This chain is Stress response protein NST1 (NST1), found in Saccharomyces cerevisiae (strain ATCC 204508 / S288c) (Baker's yeast).